A 241-amino-acid chain; its full sequence is 1-(5-phosphoribosyl)-5-[(5-phosphoribosylamino)methylideneamino] imidazole-4-carboxamide isomerase (241 aa).

Catalysis depends on Asp-8, which acts as the Proton acceptor. Asp-130 acts as the Proton donor in catalysis.

This sequence belongs to the HisA/HisF family.

It is found in the cytoplasm. It carries out the reaction 1-(5-phospho-beta-D-ribosyl)-5-[(5-phospho-beta-D-ribosylamino)methylideneamino]imidazole-4-carboxamide = 5-[(5-phospho-1-deoxy-D-ribulos-1-ylimino)methylamino]-1-(5-phospho-beta-D-ribosyl)imidazole-4-carboxamide. It functions in the pathway amino-acid biosynthesis; L-histidine biosynthesis; L-histidine from 5-phospho-alpha-D-ribose 1-diphosphate: step 4/9. In Francisella philomiragia subsp. philomiragia (strain ATCC 25017 / CCUG 19701 / FSC 153 / O#319-036), this protein is 1-(5-phosphoribosyl)-5-[(5-phosphoribosylamino)methylideneamino] imidazole-4-carboxamide isomerase.